A 539-amino-acid chain; its full sequence is Phosphoenolpyruvate carboxykinase (ATP) (539 aa).

Arg64, Tyr206, and Lys212 together coordinate substrate. ATP is bound by residues Lys212, His231, and 247–255; that span reads GLSGTGKTT. Positions 212 and 231 each coordinate Mn(2+). Residue Asp268 coordinates Mn(2+). Residues Glu296, Arg332, 448–449, and Thr454 each bind ATP; that span reads RI. Substrate is bound at residue Arg332.

This sequence belongs to the phosphoenolpyruvate carboxykinase (ATP) family. Monomer. It depends on Mn(2+) as a cofactor.

It is found in the cytoplasm. It catalyses the reaction oxaloacetate + ATP = phosphoenolpyruvate + ADP + CO2. Its pathway is carbohydrate biosynthesis; gluconeogenesis. In terms of biological role, involved in the gluconeogenesis. Catalyzes the conversion of oxaloacetate (OAA) to phosphoenolpyruvate (PEP) through direct phosphoryl transfer between the nucleoside triphosphate and OAA. This chain is Phosphoenolpyruvate carboxykinase (ATP), found in Hamiltonella defensa subsp. Acyrthosiphon pisum (strain 5AT).